Consider the following 192-residue polypeptide: Crossover junction endodeoxyribonuclease RuvC (192 aa).

Residues D8, E67, and D139 contribute to the active site. The Mg(2+) site is built by D8, E67, and D139.

This sequence belongs to the RuvC family. As to quaternary structure, homodimer which binds Holliday junction (HJ) DNA. The HJ becomes 2-fold symmetrical on binding to RuvC with unstacked arms; it has a different conformation from HJ DNA in complex with RuvA. In the full resolvosome a probable DNA-RuvA(4)-RuvB(12)-RuvC(2) complex forms which resolves the HJ. The cofactor is Mg(2+).

The protein localises to the cytoplasm. It catalyses the reaction Endonucleolytic cleavage at a junction such as a reciprocal single-stranded crossover between two homologous DNA duplexes (Holliday junction).. The RuvA-RuvB-RuvC complex processes Holliday junction (HJ) DNA during genetic recombination and DNA repair. Endonuclease that resolves HJ intermediates. Cleaves cruciform DNA by making single-stranded nicks across the HJ at symmetrical positions within the homologous arms, yielding a 5'-phosphate and a 3'-hydroxyl group; requires a central core of homology in the junction. The consensus cleavage sequence is 5'-(A/T)TT(C/G)-3'. Cleavage occurs on the 3'-side of the TT dinucleotide at the point of strand exchange. HJ branch migration catalyzed by RuvA-RuvB allows RuvC to scan DNA until it finds its consensus sequence, where it cleaves and resolves the cruciform DNA. This is Crossover junction endodeoxyribonuclease RuvC from Haemophilus ducreyi (strain 35000HP / ATCC 700724).